A 239-amino-acid polypeptide reads, in one-letter code: Ribosomal RNA small subunit methyltransferase G (239 aa).

S-adenosyl-L-methionine is bound by residues Gly-76, Phe-81, 99 to 101 (DSS), 128 to 129 (IE), and Arg-147.

Belongs to the methyltransferase superfamily. RNA methyltransferase RsmG family.

Its subcellular location is the cytoplasm. Specifically methylates the N7 position of a guanine in 16S rRNA. The chain is Ribosomal RNA small subunit methyltransferase G from Prochlorococcus marinus subsp. pastoris (strain CCMP1986 / NIES-2087 / MED4).